The primary structure comprises 250 residues: AA9 family lytic polysaccharide monooxygenase E (250 aa).

The N-terminal stretch at Met1 to Gly21 is a signal peptide. Cu(2+) contacts are provided by His22 and His107. 2 disulfide bridges follow: Cys77–Cys199 and Cys118–Cys122. Asn159 carries an N-linked (GlcNAc...) asparagine glycan. O2-binding residues include His185 and Gln194. Tyr196 lines the Cu(2+) pocket.

This sequence belongs to the polysaccharide monooxygenase AA9 family. Requires Cu(2+) as cofactor.

It is found in the secreted. It catalyses the reaction [(1-&gt;4)-beta-D-glucosyl]n+m + reduced acceptor + O2 = 4-dehydro-beta-D-glucosyl-[(1-&gt;4)-beta-D-glucosyl]n-1 + [(1-&gt;4)-beta-D-glucosyl]m + acceptor + H2O.. Lytic polysaccharide monooxygenase (LPMO) that depolymerizes crystalline and amorphous polysaccharides via the oxidation of scissile alpha- or beta-(1-4)-glycosidic bonds, yielding C1 or C4 oxidation products. Catalysis by LPMOs requires the reduction of the active-site copper from Cu(II) to Cu(I) by a reducing agent and H(2)O(2) or O(2) as a cosubstrate. This chain is AA9 family lytic polysaccharide monooxygenase E, found in Aspergillus tamarii.